Reading from the N-terminus, the 454-residue chain is Methylenetetrahydrofolate--tRNA-(uracil-5-)-methyltransferase TrmFO (454 aa).

9–14 (GAGLAG) provides a ligand contact to FAD. The tract at residues 432–454 (LERVSPPSRETGEPTGAEQVDLA) is disordered.

It belongs to the MnmG family. TrmFO subfamily. It depends on FAD as a cofactor.

The protein localises to the cytoplasm. The catalysed reaction is uridine(54) in tRNA + (6R)-5,10-methylene-5,6,7,8-tetrahydrofolate + NADH + H(+) = 5-methyluridine(54) in tRNA + (6S)-5,6,7,8-tetrahydrofolate + NAD(+). It catalyses the reaction uridine(54) in tRNA + (6R)-5,10-methylene-5,6,7,8-tetrahydrofolate + NADPH + H(+) = 5-methyluridine(54) in tRNA + (6S)-5,6,7,8-tetrahydrofolate + NADP(+). Catalyzes the folate-dependent formation of 5-methyl-uridine at position 54 (M-5-U54) in all tRNAs. This Pelobacter propionicus (strain DSM 2379 / NBRC 103807 / OttBd1) protein is Methylenetetrahydrofolate--tRNA-(uracil-5-)-methyltransferase TrmFO.